The sequence spans 1091 residues: Ubiquitin carboxyl-terminal hydrolase 36 (1091 aa).

The segment at 115-152 is disordered; the sequence is ANGHDNNGRKLSDHPNQNHNHANPNGHHANPNELPKPK. Residues 128 to 146 show a composition bias toward low complexity; the sequence is HPNQNHNHANPNGHHANPN. Positions 176–484 constitute a USP domain; sequence SGMINAGNTC…NAYIMFYELD (309 aa). Cys-185 serves as the catalytic Nucleophile. Catalysis depends on His-443, which acts as the Proton acceptor. A phosphoserine mark is found at Ser-518 and Ser-522. 4 disordered regions span residues 523-572, 594-892, 972-1007, and 1068-1091; these read PAKF…KSPL, PTAN…ELLK, QRDL…GYNP, and LAAG…QQQS. Residues 547 to 572 are compositionally biased toward polar residues; that stretch reads TTIQFKPQHQPSHQQNGVQQSAKSPL. The span at 594-612 shows a compositional bias: low complexity; that stretch reads PTANGNKSSSNHSNHKSVN. The span at 643–652 shows a compositional bias: basic and acidic residues; the sequence is KMDDCMDSGK. Positions 653-667 are enriched in low complexity; sequence PKSPVKTPVKTPLKS. Phosphothreonine occurs at positions 659 and 663. A phosphoserine mark is found at Ser-673 and Ser-675. Over residues 691–702 the composition is skewed to basic and acidic residues; the sequence is RSSDSSDSEHEP. Residues 703 to 727 show a composition bias toward polar residues; it reads TTSSVQLNGHSKTNGSLSNGSSKST. A Phosphoserine modification is found at Ser-749. A compositionally biased stretch (acidic residues) spans 749 to 759; sequence SEDDDDDEDEP. The segment covering 769-780 has biased composition (low complexity); sequence PQKQSQSQSRSG. The segment covering 781–790 has biased composition (pro residues); it reads PPSPKTPPSP. Ser-783 bears the Phosphoserine mark. Phosphothreonine is present on Thr-786. Ser-789 bears the Phosphoserine mark. Residues 806–821 are compositionally biased toward acidic residues; that stretch reads DGDDDEDDDDDDDEVV. Thr-829 carries the post-translational modification Phosphothreonine. 2 stretches are compositionally biased toward polar residues: residues 838–850 and 863–886; these read FASS…SPTT and AIKT…NGGT. Ser-847 carries the post-translational modification Phosphoserine. Thr-850 carries the post-translational modification Phosphothreonine.

It belongs to the peptidase C19 family. In terms of assembly, interacts with atms/PAF1, but not with CycT.

The protein localises to the nucleus. The protein resides in the nucleolus. It catalyses the reaction Thiol-dependent hydrolysis of ester, thioester, amide, peptide and isopeptide bonds formed by the C-terminal Gly of ubiquitin (a 76-residue protein attached to proteins as an intracellular targeting signal).. In terms of biological role, required for maintaining multiple types of adult stem cells, including male and female germline, epithelial follicle cell and intestinal stem cells. May function as a transcriptional repressor by continually deubiquiting histone H2B at the promoters of genes critical for cellular differentiation, thereby preventing histone H3 'Lys-4' trimethylation (H3K4). Controls selective autophagy activation by ubiquitinated proteins. In Drosophila ananassae (Fruit fly), this protein is Ubiquitin carboxyl-terminal hydrolase 36 (Usp36).